The primary structure comprises 471 residues: Monocarboxylate transporter 11 (471 aa).

Over residues methionine 1–phenylalanine 13 the composition is skewed to basic residues. The segment at methionine 1–glycine 31 is disordered. The Cytoplasmic portion of the chain corresponds to methionine 1 to glycine 35. Low complexity predominate over residues proline 19–glutamine 28. A run of 12 helical transmembrane segments spans residues glycine 36–leucine 56, alanine 78–leucine 98, proline 106–serine 126, leucine 131–leucine 151, valine 163–alanine 183, leucine 198–valine 218, alanine 243–valine 263, glycine 273–alanine 293, leucine 312–valine 332, glycine 333–alanine 353, leucine 367–leucine 389, and alanine 407–proline 427. At arginine 428–cysteine 471 the chain is on the cytoplasmic side.

Belongs to the major facilitator superfamily. Monocarboxylate porter (TC 2.A.1.13) family. As to quaternary structure, interacts with isoform 2 of BSG. As to expression, expressed in liver, salivary gland and thyroid.

The protein localises to the endoplasmic reticulum membrane. Its subcellular location is the cell membrane. The catalysed reaction is pyruvate(out) + H(+)(out) = pyruvate(in) + H(+)(in). Proton-linked monocarboxylate transporter. It catalyzes the transport of pyruvate across the plasma membrane. Probably involved in hepatic lipid metabolism: overexpression results in an increase of triacylglycerol(TAG) levels, small increases in intracellular diacylglycerols and decreases in lysophosphatidylcholine, cholesterol ester and sphingomyelin lipids. The chain is Monocarboxylate transporter 11 (SLC16A11) from Homo sapiens (Human).